A 266-amino-acid polypeptide reads, in one-letter code: Luciferase (266 aa).

The chain crosses the membrane as a helical span at residues 22–41 (GLAAACCALAVASTIAFPYI).

This sequence belongs to the fungal luciferase family.

It is found in the membrane. The catalysed reaction is 3-hydroxyhispidin + O2 = (E)-caffeoylpyruvate + hnu + CO2. It carries out the reaction 3-hydroxyhispidin + O2 = 4-[(E)-2-(3,4-dihydroxyphenyl)ethenyl]-1,7-dihydroxy-2,3,5-trioxabicyclo[2.2.2]oct-7-en-6-one. Its function is as follows. Luciferase; part of the gene cluster that mediates the fungal bioluminescence cycle. Uses the fungal luciferin 3-hydroxyhispidin as a substrate to produce an endoperoxide as a high-energy intermediate with decomposition that yields oxyluciferin (also known as caffeoylpyruvate) and light emission. The fungal bioluminescence cycle begins with the hispidin synthetase that catalyzes the formation of hispidin which is further hydroxylated by the hispidin-3-hydroxylase, yielding the fungal luciferin 3-hydroxyhispidin. The luciferase then produces an endoperoxide as a high-energy intermediate with decomposition that yields oxyluciferin and light emission. Oxyluciferin can be recycled to caffeic acid by caffeoylpyruvate hydrolase. This Armillaria gallica (Bulbous honey fungus) protein is Luciferase.